Consider the following 84-residue polypeptide: Mu-conotoxin-like Cal 12.2d (84 aa).

An N-terminal signal peptide occupies residues 1-19 (MKLTCVLVVLLLVLPFGDL). Residues 20–42 (ITTSNTEDNKRGATPWQNSLKAR) constitute a propeptide that is removed on maturation. Residue Trp72 is modified to 6'-bromotryptophan. At Pro77 the chain carries 4-hydroxyproline. Trp81 is subject to 6'-bromotryptophan.

It belongs to the conotoxin O1 superfamily. Post-translationally, contains 4 disulfide bonds. As to expression, expressed by the venom duct.

It localises to the secreted. Mu-conotoxins block voltage-gated sodium channels. This toxin reversibly blocks voltage-gated sodium channel in cephalopods, with no alteration in the voltage dependence of sodium conductance or on the kinetics of inactivation. The protein is Mu-conotoxin-like Cal 12.2d of Californiconus californicus (California cone).